A 291-amino-acid polypeptide reads, in one-letter code: Probable prolyl 4-hydroxylase 12 (291 aa).

Residues 1 to 156 lie on the Cytoplasmic side of the membrane; that stretch reads MACLSRIFLI…GEEPSSVLHE (156 aa). The 115-residue stretch at 125–239 folds into the Fe2OG dioxygenase domain; it reads NGGSIKVRSY…LLVATKLIYA (115 aa). Fe cation contacts are provided by lysine 142 and aspartate 144. The helical; Signal-anchor for type II membrane protein transmembrane segment at 157-173 threads the bilayer; that stretch reads SLLATVVLYLSNTTQGG. Residues 174 to 291 are Lumenal-facing; sequence ELLFPNSEMK…GTCRKSCNAC (118 aa). An N-linked (GlcNAc...) asparagine glycan is attached at asparagine 211. Position 220 (histidine 220) interacts with Fe cation. The ShKT domain maps to 251-291; the sequence is CSDEDENCGRWAKLGECKKNPVYMIGSPDYYGTCRKSCNAC. Disulfide bonds link cysteine 251-cysteine 291, cysteine 258-cysteine 284, and cysteine 267-cysteine 288.

The protein belongs to the P4HA family. Requires Fe(2+) as cofactor. It depends on L-ascorbate as a cofactor.

Its subcellular location is the endoplasmic reticulum membrane. The enzyme catalyses L-prolyl-[collagen] + 2-oxoglutarate + O2 = trans-4-hydroxy-L-prolyl-[collagen] + succinate + CO2. Functionally, catalyzes the post-translational formation of 4-hydroxyproline in -Xaa-Pro-Gly- sequences in proline-rich peptide sequences of plant glycoproteins and other proteins. Hydroxyprolines are important constituent of many plant cell wall glycoproteins such as extensins, hydroxyproline-rich glycoproteins, lectins and arabinogalactan proteins. This chain is Probable prolyl 4-hydroxylase 12, found in Arabidopsis thaliana (Mouse-ear cress).